We begin with the raw amino-acid sequence, 300 residues long: 4-hydroxy-tetrahydrodipicolinate synthase (300 aa).

T54 serves as a coordination point for pyruvate. The active-site Proton donor/acceptor is Y142. K170 functions as the Schiff-base intermediate with substrate in the catalytic mechanism. I212 is a binding site for pyruvate.

Belongs to the DapA family. In terms of assembly, homotetramer; dimer of dimers.

The protein resides in the cytoplasm. It catalyses the reaction L-aspartate 4-semialdehyde + pyruvate = (2S,4S)-4-hydroxy-2,3,4,5-tetrahydrodipicolinate + H2O + H(+). It participates in amino-acid biosynthesis; L-lysine biosynthesis via DAP pathway; (S)-tetrahydrodipicolinate from L-aspartate: step 3/4. Its function is as follows. Catalyzes the condensation of (S)-aspartate-beta-semialdehyde [(S)-ASA] and pyruvate to 4-hydroxy-tetrahydrodipicolinate (HTPA). In Halorhodospira halophila (strain DSM 244 / SL1) (Ectothiorhodospira halophila (strain DSM 244 / SL1)), this protein is 4-hydroxy-tetrahydrodipicolinate synthase.